The chain runs to 224 residues: 7-cyano-7-deazaguanine synthase (224 aa).

12–22 (LSGGLDSSTVT) lines the ATP pocket. Cysteine 193, cysteine 201, cysteine 204, and cysteine 207 together coordinate Zn(2+).

It belongs to the QueC family. Zn(2+) is required as a cofactor.

It catalyses the reaction 7-carboxy-7-deazaguanine + NH4(+) + ATP = 7-cyano-7-deazaguanine + ADP + phosphate + H2O + H(+). The protein operates within purine metabolism; 7-cyano-7-deazaguanine biosynthesis. Functionally, catalyzes the ATP-dependent conversion of 7-carboxy-7-deazaguanine (CDG) to 7-cyano-7-deazaguanine (preQ(0)). The protein is 7-cyano-7-deazaguanine synthase of Prochlorococcus marinus subsp. pastoris (strain CCMP1986 / NIES-2087 / MED4).